A 192-amino-acid polypeptide reads, in one-letter code: dTTP/UTP pyrophosphatase (192 aa).

Residue Asp-72 is the Proton acceptor of the active site.

The protein belongs to the Maf family. YhdE subfamily. A divalent metal cation is required as a cofactor.

The protein resides in the cytoplasm. The enzyme catalyses dTTP + H2O = dTMP + diphosphate + H(+). It catalyses the reaction UTP + H2O = UMP + diphosphate + H(+). Its function is as follows. Nucleoside triphosphate pyrophosphatase that hydrolyzes dTTP and UTP. May have a dual role in cell division arrest and in preventing the incorporation of modified nucleotides into cellular nucleic acids. The polypeptide is dTTP/UTP pyrophosphatase (Hydrogenovibrio crunogenus (strain DSM 25203 / XCL-2) (Thiomicrospira crunogena)).